The sequence spans 346 residues: Small ribosomal subunit biogenesis GTPase RsgA (346 aa).

Positions 1–26 (MAKRKLTQNQTRRIQSNNAKTLHRHK) are disordered. Polar residues predominate over residues 7–20 (TQNQTRRIQSNNAK). The region spanning 103–271 (ENEISRPDYY…LIDSPGIREF (169 aa)) is the CP-type G domain. GTP is bound by residues 159–162 (NKVD) and 213–221 (GQSGVGKSS). Zn(2+)-binding residues include Cys295, Cys300, His302, and Cys308.

This sequence belongs to the TRAFAC class YlqF/YawG GTPase family. RsgA subfamily. Monomer. Associates with 30S ribosomal subunit, binds 16S rRNA. The cofactor is Zn(2+).

The protein localises to the cytoplasm. One of several proteins that assist in the late maturation steps of the functional core of the 30S ribosomal subunit. Helps release RbfA from mature subunits. May play a role in the assembly of ribosomal proteins into the subunit. Circularly permuted GTPase that catalyzes slow GTP hydrolysis, GTPase activity is stimulated by the 30S ribosomal subunit. This Haemophilus influenzae (strain 86-028NP) protein is Small ribosomal subunit biogenesis GTPase RsgA.